The chain runs to 382 residues: 1-deoxy-D-xylulose 5-phosphate reductoisomerase (382 aa).

Residues Thr-10, Gly-11, Ser-12, Ile-13, Asn-38, and Asn-120 each coordinate NADPH. Residue Lys-121 coordinates 1-deoxy-D-xylulose 5-phosphate. Glu-122 contributes to the NADPH binding site. Position 146 (Asp-146) interacts with Mn(2+). 1-deoxy-D-xylulose 5-phosphate is bound by residues Ser-147, Glu-148, Ser-172, and His-195. Glu-148 contacts Mn(2+). Residue Gly-201 coordinates NADPH. Residues Ser-208, Asn-213, Lys-214, and Glu-217 each coordinate 1-deoxy-D-xylulose 5-phosphate. Glu-217 serves as a coordination point for Mn(2+).

It belongs to the DXR family. Mg(2+) is required as a cofactor. It depends on Mn(2+) as a cofactor.

It catalyses the reaction 2-C-methyl-D-erythritol 4-phosphate + NADP(+) = 1-deoxy-D-xylulose 5-phosphate + NADPH + H(+). Its pathway is isoprenoid biosynthesis; isopentenyl diphosphate biosynthesis via DXP pathway; isopentenyl diphosphate from 1-deoxy-D-xylulose 5-phosphate: step 1/6. In terms of biological role, catalyzes the NADPH-dependent rearrangement and reduction of 1-deoxy-D-xylulose-5-phosphate (DXP) to 2-C-methyl-D-erythritol 4-phosphate (MEP). In Thermoanaerobacter sp. (strain X514), this protein is 1-deoxy-D-xylulose 5-phosphate reductoisomerase.